The primary structure comprises 287 residues: MLRILTLSILATSKLASAHVVAWHPGMYCLGGNDTSVDDPNTNLAVNPLWDLPKSKWWFQADRGCDKAPPVDGVFLELPAGQNFTTELAHNRAQTTLSFNGQYAGEWPDGKDHPEDWSGTGTPPGCIQDDGAIHTNNQTMAGGTVFAISYQSDMSQVTMENLVVFSVLEHTPWKRIATYEVPADLPPCPDAGCICAWGWVPQGCGEPNMYMAGYKCKVTGSSSTKQLAQAQVPKYCANDTSECVGGAKQILVMNQADGNNVVAPDNDFVAYNEKWGFQNGAQNDIFM.

The signal sequence occupies residues 1–18 (MLRILTLSILATSKLASA). 3 N-linked (GlcNAc...) asparagine glycosylation sites follow: asparagine 33, asparagine 83, and asparagine 137. Intrachain disulfides connect cysteine 188/cysteine 193, cysteine 195/cysteine 216, and cysteine 236/cysteine 243. An N-linked (GlcNAc...) asparagine glycan is attached at asparagine 238.

This sequence belongs to the polysaccharide monooxygenase AA14 family. The cofactor is Cu(2+).

It localises to the secreted. Lytic polysaccharide monooxygenase (LPMO) that has a broad substrate specificity with strong oxidative activity on pure amorphous cellulose and xyloglucan and plays as a bifunctional enzyme to decompose some specific network structures formed between cellulose and hemicellulose in the plant cell walls. Catalysis by LPMOs requires the reduction of the active-site copper from Cu(II) to Cu(I) by a reducing agent and H(2)O(2) or O(2) as a cosubstrate. Simultaneously oxidizes cellulose, xylan and xyloglucan in natural hemi/cellulosic substrate such as fibrillated eucalyptus pulp, and releases native and oxidized cello-oligosaccharides, xylo-oligosaccharides and xyloglucan oligosaccharides from this substrate. The cellulolytic/hemicellulolytic activity becomes weaker as the contents of xylan increase in the alkaline-extracted hemi/cellulosic substrates. In Talaromyces rugulosus (Penicillium rugulosum), this protein is AA14 family lytic polysaccharide monooxygenase A.